Here is a 227-residue protein sequence, read N- to C-terminus: Riboflavin kinase (227 aa).

Positions 1–92 (MSKDYEVFPL…LKRTIDSSTF (92 aa)) are H-T-H motif-like. Residues 93 to 227 (LTLRGYVVPG…GDKVEVVIPV (135 aa)) form a riboflavin kinase region. Position 102 to 107 (102 to 107 (GLGEGA)) interacts with CDP. Residues Thr-131 and Asn-133 each contribute to the Mg(2+) site. Residues Thr-194 and Glu-202 each coordinate FMN. CDP is bound at residue 207-210 (VRLR).

The protein belongs to the archaeal riboflavin kinase family. Mg(2+) serves as cofactor.

It carries out the reaction riboflavin + CTP = CDP + FMN + H(+). It functions in the pathway cofactor biosynthesis; FMN biosynthesis; FMN from riboflavin (CTP route): step 1/1. Functionally, catalyzes the CTP-dependent phosphorylation of riboflavin (vitamin B2) to form flavin mononucleotide (FMN). The protein is Riboflavin kinase (ribK) of Thermofilum pendens (strain DSM 2475 / Hrk 5).